The sequence spans 342 residues: Dihydroorotase (342 aa).

Zn(2+)-binding residues include histidine 13 and histidine 15. Residues 15–17 (HLR) and asparagine 41 each bind substrate. 3 residues coordinate Zn(2+): lysine 98, histidine 135, and histidine 173. Residue lysine 98 is modified to N6-carboxylysine. Residue histidine 135 coordinates substrate. Residue leucine 218 participates in substrate binding. Aspartate 246 provides a ligand contact to Zn(2+). Aspartate 246 is an active-site residue. Substrate is bound by residues histidine 250 and alanine 262.

It belongs to the metallo-dependent hydrolases superfamily. DHOase family. Class II DHOase subfamily. As to quaternary structure, homodimer. Requires Zn(2+) as cofactor.

It catalyses the reaction (S)-dihydroorotate + H2O = N-carbamoyl-L-aspartate + H(+). The protein operates within pyrimidine metabolism; UMP biosynthesis via de novo pathway; (S)-dihydroorotate from bicarbonate: step 3/3. Its function is as follows. Catalyzes the reversible cyclization of carbamoyl aspartate to dihydroorotate. The polypeptide is Dihydroorotase (Vibrio cholerae serotype O1 (strain ATCC 39315 / El Tor Inaba N16961)).